The following is an 887-amino-acid chain: MEKAKLTKNLKLKIKNAQLTKAAGLDKLKQKLAQAGSSETKSSSEKPSTKVPEKIAKEKVVKKKSVVDPGVPTMTEPVSAENSPRRIRAKNHSSFVSEDLNSPQPPVPVDSDASAFSDSAVVEEVDSFVETEQEISVSTPPPPVTEETEVVAKEPPAPKKEPEVVVKKEPPKSVVSIKSNFGPTGKHINHLLAKTFKAPKKEDKPAPKEKTKTTQTKPQQSSDASNDKHHSPTNRTSQPFYRRDVSKKSGSDFRDRAKKDDNPKAFTGRDRYGLNDSSDDDKWRKKRVQKTKKHYEEHAIQRPTHIKVPLPITIKDLAAEMKLKASELIQKMFIHGMTYVVNDVLDNETTVQFIGLEFGCTIDIDSSEQDKLCIESNTVKEEIQETDPSKLITRPPIVAFMGHVDHGKTTLIDSLRKTNVAAVEAGAITQHMGAFCCSTPVGNLTILDTPGHEAFSAMRARGAEVCDIVVLVVAGDEGIKEQTLEAVKHARAANITIVVAINKCDKPNFNADTIYRQLAEIELLPEAWGGTTVTINTSAKTGEGLSELLEMLALQAEVLELKANPSARARGLVIESELHKGLGAVATILVQNGTLHLGEALVFNDCYGKVKTMHNEHNQLMKSASPSIPALITGLSSMPKAGDPFVVVKNEKTAKEIVGARLAGQQKFALQKKRPNFDAMLQNKKILKLIIKADVQGSIEALANSILKITSDKVSAEILANSVGEISESDIRLAAASKAVIIGFHTGIESHAESLIKNLGVKVQLFNIIYHAVDAVKEMMTALLDPIAEEKNLGSAEIKETFKSSQLGTIYGCLVSEGTMTRNQKVRVVRGNEIVWKGNLSSLKRIKEDVKEVKKGFECGILLEGCQHAQVGDILQCYEVIYHPQKL.

Disordered regions lie at residues 31–87, 94–113, and 129–285; these read KLAQ…PRRI, SFVS…DSDA, and VETE…KWRK. Over residues 42 to 59 the composition is skewed to basic and acidic residues; sequence SSSEKPSTKVPEKIAKEK. Composition is skewed to basic and acidic residues over residues 150–171 and 199–212; these read VVAK…KEPP and PKKE…EKTK. The segment covering 213-223 has biased composition (low complexity); that stretch reads TTQTKPQQSSD. A compositionally biased stretch (basic and acidic residues) spans 241-273; it reads YRRDVSKKSGSDFRDRAKKDDNPKAFTGRDRYG. The 170-residue stretch at 393-562 folds into the tr-type G domain; sequence TRPPIVAFMG…ALQAEVLELK (170 aa). The tract at residues 402–409 is G1; the sequence is GHVDHGKT. 402 to 409 is a GTP binding site; sequence GHVDHGKT. Positions 427–431 are G2; sequence AITQH. Residues 448–451 are G3; it reads DTPG. Residues 448–452 and 502–505 each bind GTP; these read DTPGH and NKCD. The tract at residues 502 to 505 is G4; it reads NKCD. Positions 538-540 are G5; sequence SAK.

This sequence belongs to the TRAFAC class translation factor GTPase superfamily. Classic translation factor GTPase family. IF-2 subfamily.

It localises to the cytoplasm. Functionally, one of the essential components for the initiation of protein synthesis. Protects formylmethionyl-tRNA from spontaneous hydrolysis and promotes its binding to the 30S ribosomal subunits. Also involved in the hydrolysis of GTP during the formation of the 70S ribosomal complex. The sequence is that of Translation initiation factor IF-2 from Chlamydia caviae (strain ATCC VR-813 / DSM 19441 / 03DC25 / GPIC) (Chlamydophila caviae).